Reading from the N-terminus, the 176-residue chain is ATP-dependent protease subunit HslV (176 aa).

The active site involves T2. 3 residues coordinate Na(+): S157, C160, and T163.

Belongs to the peptidase T1B family. HslV subfamily. In terms of assembly, a double ring-shaped homohexamer of HslV is capped on each side by a ring-shaped HslU homohexamer. The assembly of the HslU/HslV complex is dependent on binding of ATP.

The protein localises to the cytoplasm. The enzyme catalyses ATP-dependent cleavage of peptide bonds with broad specificity.. Its activity is regulated as follows. Allosterically activated by HslU binding. In terms of biological role, protease subunit of a proteasome-like degradation complex believed to be a general protein degrading machinery. The sequence is that of ATP-dependent protease subunit HslV from Buchnera aphidicola subsp. Baizongia pistaciae (strain Bp).